Reading from the N-terminus, the 364-residue chain is tRNA-specific 2-thiouridylase MnmA 1 (364 aa).

Residues 10-17 (GMSGGVDS) and M36 contribute to the ATP site. The active-site Nucleophile is C106. C106 and C204 are joined by a disulfide. G130 lines the ATP pocket. The tract at residues 154 to 156 (KDQ) is interaction with tRNA. C204 functions as the Cysteine persulfide intermediate in the catalytic mechanism. Positions 310-311 (RY) are interaction with tRNA.

Belongs to the MnmA/TRMU family.

The protein localises to the cytoplasm. The enzyme catalyses S-sulfanyl-L-cysteinyl-[protein] + uridine(34) in tRNA + AH2 + ATP = 2-thiouridine(34) in tRNA + L-cysteinyl-[protein] + A + AMP + diphosphate + H(+). Its function is as follows. Catalyzes the 2-thiolation of uridine at the wobble position (U34) of tRNA, leading to the formation of s(2)U34. In Thermoanaerobacter sp. (strain X514), this protein is tRNA-specific 2-thiouridylase MnmA 1.